The primary structure comprises 325 residues: Delta(1)-pyrroline-2-carboxylate reductase (325 aa).

It belongs to the ornithine cyclodeaminase/mu-crystallin family.

It carries out the reaction L-proline + NAD(+) = 1-pyrroline-2-carboxylate + NADH + H(+). The enzyme catalyses L-proline + NADP(+) = 1-pyrroline-2-carboxylate + NADPH + H(+). Functionally, catalyzes the reduction of Delta(1)-pyrroline-2-carboxylate (Pyr2C) to L-proline, using preferentially NADPH over NADH as the electron donor. Is likely involved in a degradation pathway that converts trans-3-hydroxy-L-proline (t3LHyp) to L-proline. In Bacillus thuringiensis subsp. konkukian (strain 97-27), this protein is Delta(1)-pyrroline-2-carboxylate reductase.